A 607-amino-acid chain; its full sequence is uncharacterized protein (607 aa).

2 disordered regions span residues 28–114 and 142–188; these read GAER…KLRR and DQER…NNSS. Positions 35 to 50 are enriched in polar residues; that stretch reads SSHGSINSRSASPNKA. Composition is skewed to basic and acidic residues over residues 90 to 102 and 161 to 174; these read VNGEGAEKGDHDT and KENKSLKTTAKDLS. Over residues 177–188 the composition is skewed to low complexity; that stretch reads SSSSMKKANNSS. 2 PHD-type zinc fingers span residues 263–312 and 406–459; these read NDYC…CKHH and PILC…HSDH.

This is an uncharacterized protein from Schizosaccharomyces pombe (strain 972 / ATCC 24843) (Fission yeast).